Here is a 340-residue protein sequence, read N- to C-terminus: ATP-dependent 6-phosphofructokinase (340 aa).

An ATP-binding site is contributed by G11. 21 to 25 contacts ADP; that stretch reads RAVVR. ATP is bound by residues 72–73 and 102–105; these read RY and GDGS. D103 contributes to the Mg(2+) binding site. 125-127 is a substrate binding site; sequence TID. The active-site Proton acceptor is D127. R154 lines the ADP pocket. Substrate-binding positions include R162 and 169–171; that span reads MGR. Residues 185–187 and 213–215 each bind ADP; these read GAD and KHH. Substrate is bound by residues E222, R244, and 250-253; that span reads HLLR.

It belongs to the phosphofructokinase type A (PFKA) family. ATP-dependent PFK group I subfamily. Prokaryotic clade 'B1' sub-subfamily. In terms of assembly, homotetramer. Mg(2+) is required as a cofactor.

Its subcellular location is the cytoplasm. It carries out the reaction beta-D-fructose 6-phosphate + ATP = beta-D-fructose 1,6-bisphosphate + ADP + H(+). The protein operates within carbohydrate degradation; glycolysis; D-glyceraldehyde 3-phosphate and glycerone phosphate from D-glucose: step 3/4. Its activity is regulated as follows. Allosterically activated by ADP and other diphosphonucleosides, and allosterically inhibited by phosphoenolpyruvate. Its function is as follows. Catalyzes the phosphorylation of D-fructose 6-phosphate to fructose 1,6-bisphosphate by ATP, the first committing step of glycolysis. The polypeptide is ATP-dependent 6-phosphofructokinase (Streptococcus agalactiae serotype Ia (strain ATCC 27591 / A909 / CDC SS700)).